A 490-amino-acid chain; its full sequence is UDP-N-acetylmuramate--L-alanine ligase (490 aa).

133–139 (GTHGKTS) is a binding site for ATP.

Belongs to the MurCDEF family.

It localises to the cytoplasm. The catalysed reaction is UDP-N-acetyl-alpha-D-muramate + L-alanine + ATP = UDP-N-acetyl-alpha-D-muramoyl-L-alanine + ADP + phosphate + H(+). Its pathway is cell wall biogenesis; peptidoglycan biosynthesis. Functionally, cell wall formation. This is UDP-N-acetylmuramate--L-alanine ligase from Saccharopolyspora erythraea (strain ATCC 11635 / DSM 40517 / JCM 4748 / NBRC 13426 / NCIMB 8594 / NRRL 2338).